Reading from the N-terminus, the 142-residue chain is Salivary protein 15b (142 aa).

Positions 1–20 (MKYLGLALISAVFLIGTCQA) are cleaved as a signal peptide. Disulfide bonds link C27–C44, C40–C108, and C91–C117.

Belongs to the PBP/GOBP family. As to expression, female salivary gland.

The protein resides in the secreted. Functionally, inhibits contact coagulation pathway activation in the host by sequestering anionic polymers, such as dextran sulfate and heparin, and thus blocking interaction of protein components of the pathway with negatively charged surfaces. Inhibits dextran sulfate-mediated autoactivation of host coagulation factor XII (F12). Inhibits dextran sulfate-mediated activation of host factor XI (F11) by activated F12. Inhibits polyphosphate-induced plasma extravasation at the injection site in mouse model, probably via inhibition of bradykinin generation in host skin. The polypeptide is Salivary protein 15b (Phlebotomus duboscqi (Sandfly)).